The primary structure comprises 180 residues: Large ribosomal subunit protein uL6 (180 aa).

This sequence belongs to the universal ribosomal protein uL6 family. In terms of assembly, part of the 50S ribosomal subunit.

Functionally, this protein binds to the 23S rRNA, and is important in its secondary structure. It is located near the subunit interface in the base of the L7/L12 stalk, and near the tRNA binding site of the peptidyltransferase center. The chain is Large ribosomal subunit protein uL6 from Anaeromyxobacter sp. (strain Fw109-5).